Consider the following 443-residue polypeptide: Protoheme IX farnesyltransferase, mitochondrial (443 aa).

The next 7 helical transmembrane spans lie at 174–194, 235–255, 257–277, 280–300, 309–329, 364–384, and 411–431; these read AAGF…LTSV, LAVS…TLGV, PLTG…YTPL, ISIA…VMGW, AGAF…FNAL, LLVL…FPIM, and LFFC…TCKR.

The protein belongs to the UbiA prenyltransferase family.

Its subcellular location is the mitochondrion membrane. It catalyses the reaction heme b + (2E,6E)-farnesyl diphosphate + H2O = Fe(II)-heme o + diphosphate. In terms of biological role, converts protoheme IX and farnesyl diphosphate to heme O. This is Protoheme IX farnesyltransferase, mitochondrial (COX10) from Homo sapiens (Human).